We begin with the raw amino-acid sequence, 209 residues long: Large ribosomal subunit protein uL3 (209 aa).

The interval 128 to 154 (QQRGPMTHGSKFHRAPGSMGASSDPSR) is disordered.

The protein belongs to the universal ribosomal protein uL3 family. In terms of assembly, part of the 50S ribosomal subunit. Forms a cluster with proteins L14 and L19.

Its function is as follows. One of the primary rRNA binding proteins, it binds directly near the 3'-end of the 23S rRNA, where it nucleates assembly of the 50S subunit. The protein is Large ribosomal subunit protein uL3 of Clostridium beijerinckii (strain ATCC 51743 / NCIMB 8052) (Clostridium acetobutylicum).